A 294-amino-acid chain; its full sequence is Ribosomal RNA small subunit methyltransferase A (294 aa).

Positions 33, 35, 60, 81, 106, and 131 each coordinate S-adenosyl-L-methionine.

This sequence belongs to the class I-like SAM-binding methyltransferase superfamily. rRNA adenine N(6)-methyltransferase family. RsmA subfamily.

It localises to the cytoplasm. It catalyses the reaction adenosine(1518)/adenosine(1519) in 16S rRNA + 4 S-adenosyl-L-methionine = N(6)-dimethyladenosine(1518)/N(6)-dimethyladenosine(1519) in 16S rRNA + 4 S-adenosyl-L-homocysteine + 4 H(+). Specifically dimethylates two adjacent adenosines (A1518 and A1519) in the loop of a conserved hairpin near the 3'-end of 16S rRNA in the 30S particle. May play a critical role in biogenesis of 30S subunits. The protein is Ribosomal RNA small subunit methyltransferase A of Lactococcus lactis subsp. lactis (strain IL1403) (Streptococcus lactis).